Here is a 137-residue protein sequence, read N- to C-terminus: Small ribosomal subunit protein uS9 (137 aa).

Belongs to the universal ribosomal protein uS9 family.

This chain is Small ribosomal subunit protein uS9 (rps9), found in Sulfurisphaera tokodaii (strain DSM 16993 / JCM 10545 / NBRC 100140 / 7) (Sulfolobus tokodaii).